We begin with the raw amino-acid sequence, 532 residues long: Bifunctional purine biosynthesis protein PurH (532 aa).

The MGS-like domain occupies 1–149 (MTDPAPLTRA…KNHGAVTVLT (149 aa)).

This sequence belongs to the PurH family.

It carries out the reaction (6R)-10-formyltetrahydrofolate + 5-amino-1-(5-phospho-beta-D-ribosyl)imidazole-4-carboxamide = 5-formamido-1-(5-phospho-D-ribosyl)imidazole-4-carboxamide + (6S)-5,6,7,8-tetrahydrofolate. The enzyme catalyses IMP + H2O = 5-formamido-1-(5-phospho-D-ribosyl)imidazole-4-carboxamide. It participates in purine metabolism; IMP biosynthesis via de novo pathway; 5-formamido-1-(5-phospho-D-ribosyl)imidazole-4-carboxamide from 5-amino-1-(5-phospho-D-ribosyl)imidazole-4-carboxamide (10-formyl THF route): step 1/1. It functions in the pathway purine metabolism; IMP biosynthesis via de novo pathway; IMP from 5-formamido-1-(5-phospho-D-ribosyl)imidazole-4-carboxamide: step 1/1. The sequence is that of Bifunctional purine biosynthesis protein PurH from Jannaschia sp. (strain CCS1).